The chain runs to 326 residues: Ribosomal RNA small subunit methyltransferase H (326 aa).

Residues 45 to 47, Asp-65, Asp-113, and Gln-120 each bind S-adenosyl-L-methionine; that span reads GGH. Residues 299 to 326 are disordered; it reads PSAEEITRNPRSRSARLRAAERIAHDGR. Residues 316–326 show a composition bias toward basic and acidic residues; the sequence is RAAERIAHDGR.

It belongs to the methyltransferase superfamily. RsmH family.

It localises to the cytoplasm. It carries out the reaction cytidine(1402) in 16S rRNA + S-adenosyl-L-methionine = N(4)-methylcytidine(1402) in 16S rRNA + S-adenosyl-L-homocysteine + H(+). In terms of biological role, specifically methylates the N4 position of cytidine in position 1402 (C1402) of 16S rRNA. This chain is Ribosomal RNA small subunit methyltransferase H, found in Thermomicrobium roseum (strain ATCC 27502 / DSM 5159 / P-2).